Reading from the N-terminus, the 81-residue chain is ATP synthase subunit c (81 aa).

The next 2 helical transmembrane spans lie at I5–G25 and V57–A77.

Belongs to the ATPase C chain family. In terms of assembly, F-type ATPases have 2 components, F(1) - the catalytic core - and F(0) - the membrane proton channel. F(1) has five subunits: alpha(3), beta(3), gamma(1), delta(1), epsilon(1). F(0) has three main subunits: a(1), b(2) and c(10-14). The alpha and beta chains form an alternating ring which encloses part of the gamma chain. F(1) is attached to F(0) by a central stalk formed by the gamma and epsilon chains, while a peripheral stalk is formed by the delta and b chains.

It is found in the cell membrane. Functionally, f(1)F(0) ATP synthase produces ATP from ADP in the presence of a proton or sodium gradient. F-type ATPases consist of two structural domains, F(1) containing the extramembraneous catalytic core and F(0) containing the membrane proton channel, linked together by a central stalk and a peripheral stalk. During catalysis, ATP synthesis in the catalytic domain of F(1) is coupled via a rotary mechanism of the central stalk subunits to proton translocation. Key component of the F(0) channel; it plays a direct role in translocation across the membrane. A homomeric c-ring of between 10-14 subunits forms the central stalk rotor element with the F(1) delta and epsilon subunits. This is ATP synthase subunit c from Mycobacterium sp. (strain JLS).